Here is a 374-residue protein sequence, read N- to C-terminus: uncharacterized protein (374 aa).

Positions 158, 160, 190, 221, 312, and 314 each coordinate a divalent metal cation.

It belongs to the metallophosphoesterase superfamily. A divalent metal cation serves as cofactor.

This is an uncharacterized protein from Campylobacter jejuni subsp. jejuni serotype O:2 (strain ATCC 700819 / NCTC 11168).